Here is a 189-residue protein sequence, read N- to C-terminus: Adenylate kinase (189 aa).

An ATP-binding site is contributed by 11–16; it reads GSGKGT. The tract at residues 31–60 is NMP; the sequence is STGDVLRAEIKKGTELGKTAKGYIDQGQLL. AMP is bound by residues T32, R37, 58 to 60, 86 to 89, and Q93; these read QLL and GFPR. The interval 127–137 is LID; it reads KRGQESGRADD. ATP is bound at residue R128. AMP is bound by residues R134 and R145. G173 contacts ATP.

This sequence belongs to the adenylate kinase family. In terms of assembly, monomer.

The protein resides in the cytoplasm. It catalyses the reaction AMP + ATP = 2 ADP. It participates in purine metabolism; AMP biosynthesis via salvage pathway; AMP from ADP: step 1/1. Functionally, catalyzes the reversible transfer of the terminal phosphate group between ATP and AMP. Plays an important role in cellular energy homeostasis and in adenine nucleotide metabolism. In Phocaeicola vulgatus (strain ATCC 8482 / DSM 1447 / JCM 5826 / CCUG 4940 / NBRC 14291 / NCTC 11154) (Bacteroides vulgatus), this protein is Adenylate kinase.